Consider the following 723-residue polypeptide: Catalase-peroxidase (723 aa).

The first 29 residues, 1–29 (MDGNDLVENKCPVMHGGITVAGHSNTAWW), serve as a signal peptide directing secretion. Positions 97–225 (WHSAGSYRLA…LAAVQMGLIY (129 aa)) form a cross-link, tryptophyl-tyrosyl-methioninium (Trp-Tyr) (with M-251). Residue H98 is the Proton acceptor of the active site. Positions 225-251 (YVNPEGVNGKSDPLKSAAQVRETFARM) form a cross-link, tryptophyl-tyrosyl-methioninium (Tyr-Met) (with W-97). H266 is a binding site for heme b.

This sequence belongs to the peroxidase family. Peroxidase/catalase subfamily. Homodimer or homotetramer. It depends on heme b as a cofactor. In terms of processing, formation of the three residue Trp-Tyr-Met cross-link is important for the catalase, but not the peroxidase activity of the enzyme.

The enzyme catalyses H2O2 + AH2 = A + 2 H2O. It catalyses the reaction 2 H2O2 = O2 + 2 H2O. Bifunctional enzyme with both catalase and broad-spectrum peroxidase activity. This Hyphomonas neptunium (strain ATCC 15444) protein is Catalase-peroxidase.